A 177-amino-acid polypeptide reads, in one-letter code: Isopentenyl-diphosphate Delta-isomerase (177 aa).

Mn(2+) is bound by residues His22 and His28. Residues 26 to 160 form the Nudix hydrolase domain; it reads LRHKAISVFV…PERFTPWLRI (135 aa). Cys62 is a catalytic residue. His64 provides a ligand contact to Mn(2+). Residue Glu82 coordinates Mg(2+). Mn(2+) is bound by residues Glu108 and Glu110. The active site involves Glu110.

This sequence belongs to the IPP isomerase type 1 family. The cofactor is Mg(2+). Requires Mn(2+) as cofactor.

The protein resides in the cytoplasm. It catalyses the reaction isopentenyl diphosphate = dimethylallyl diphosphate. It functions in the pathway isoprenoid biosynthesis; dimethylallyl diphosphate biosynthesis; dimethylallyl diphosphate from isopentenyl diphosphate: step 1/1. Its pathway is porphyrin-containing compound metabolism; chlorophyll biosynthesis. In terms of biological role, catalyzes the 1,3-allylic rearrangement of the homoallylic substrate isopentenyl (IPP) to its highly electrophilic allylic isomer, dimethylallyl diphosphate (DMAPP). The sequence is that of Isopentenyl-diphosphate Delta-isomerase from Cereibacter sphaeroides (strain ATCC 17025 / ATH 2.4.3) (Rhodobacter sphaeroides).